The primary structure comprises 157 residues: MRSILILLSLLLTIAFASASFPYQCGPYSCQFGQVCRIDNGVSNCIPINDCHEVSLSTKVVGTWVDGSRGNKRFTQYDITITNNLNTNIKQIYIATDYTLRLRDHSNNSIWNVNLLPNGILTLPSYQPSINAHASFTFGLIIEGTQPANLNVLSVSF.

The first 19 residues, 1–19, serve as a signal peptide directing secretion; it reads MRSILILLSLLLTIAFASA.

Its subcellular location is the secreted. This Dictyostelium discoideum (Social amoeba) protein is Stalk-specific protein B (staB).